Here is a 482-residue protein sequence, read N- to C-terminus: MNGASRGDVQRPTPVQAPAKRPIPPTVFRFEKASKIGTSLDTTPKELPIRRPVPLPGPRFVKDVNPSPPATSSPNVQTQCHQPPVVRSQTHQASVSQTTPTQTTPSQYTPASVSTARAPQFHRSSHVTPSQQQRIEQAFGPAPVSQSQPQNGSYIQYNEPSTSVASTTTSFYSPNESEPVFTHAISFKPNEPENGQKAREQLELLDSGKINEINQSKVPTTIELPPNCKLFQYSWVLDGIPRTLLVPMPMDATEEDVKAMLPKTLEMDSNLFNNARPRDELPVLSFPNGTVPNVEMIGPKVQQPMLVNPKQFNRIMRRREMRQQLEASGRLPLARQKYLHESRHLHALKRKRGLDGRFDNTKTAESSSMVSSTTSPRKLKRRNRLPGEETSDSSSIVLPSPVEIQPKGGIVNSSMPSTSTGYINNGMDHQTDYIEHQQPMSTYDQYHDHVQYIAPDGNVNYHNNHDNGVDLTGSDGQSFTNL.

Positions methionine 1 to proline 160 are disordered. Polar residues predominate over residues serine 72 to alanine 93. The segment covering serine 94 to proline 110 has biased composition (low complexity). Composition is skewed to polar residues over residues histidine 126–isoleucine 135 and valine 144–proline 160. The short motif at leucine 306–glycine 329 is the Subunit association domain (SAD) element. Positions glutamine 336–threonine 361 form a DNA-binding region, NFYA/HAP2-type. The segment at histidine 344–serine 414 is disordered. A compositionally biased stretch (basic and acidic residues) spans glycine 353–lysine 362. The segment covering threonine 363–serine 375 has biased composition (low complexity).

The protein belongs to the NFYA/HAP2 subunit family. As to quaternary structure, forms a heterotrimeric transcription factor complex (nfya-1-NF-Y complex) composed of nfya-1, nfyb-1 and nfyc-1, which binds to 5'-CCAAT-3' box motif in the promoters of its target genes. Interacts with the nfyb-1 and nfyc-1 dimer; the interaction is required for subsequent binding to the 5'-CCAAT-3' box motif in DNA. Does not interact with either nfyb-1 or nfyc-1 in their monomeric form. Interacts with mes-3. As to expression, expressed in certain parts of the gonads with high expression in fertilized oocytes in the uterus and mature oocytes from the distal to the proximal arm of the gonad, but weak expression in the syncytial ovaries and immature oocytes at the beginning of the proximal arm of the gonad. Highly expressed in the head ganglia neurons and the developing hermaphrodite vulva and male tail. Weakly expressed in most somatic cells. Not expressed in the intestine, the hypodermis, body wall muscle surrounding the pseudocoelomic space, secretory cells in the pharyngeal terminal bulb wall, in the small ganglia surrounding the pharynx and in the neurons running anteriorly to the sensory organs in the head.

Its subcellular location is the nucleus. In terms of biological role, component of the sequence-specific heterotrimeric transcription factor (nfya-1-NF-Y) which specifically recognizes a 5'-CCAAT-3' box motif found in the promoters of its target genes to regulate their expression and control cellular identity in particular tissue types. In association with the components in the nfya-1-NF-Y complex, represses the expression of the T-box transcription factor tbx-2 throughout larval development, which most likely restricts its expression to certain tissues. May act to repress txb-2 expression in conjunction with tbx-2 itself, which has an autoregulatory role. With the components in this complex, negatively regulates the expression of the homeobox protein egl-5 to spatially restrict its expression in tissues such as the head. May regulate egl-5 expression in association with the mes-2-mes-3-mes-6 complex. The chain is Nuclear transcription factor Y subunit nfya-1 from Caenorhabditis elegans.